The following is a 1135-amino-acid chain: Envelopment polyprotein (1135 aa).

The signal sequence occupies residues 1-35 (MRILKLLELVVKVSLFTIALSSVLLAFLIFRATDA). Residues 36 to 314 (KVEIIRGDHP…KYSKSIYKQT (279 aa)) lie on the Lumenal side of the membrane. The short motif at 41–43 (RGD) is the Cell attachment site element. 2 disulfides stabilise this stretch: cysteine 114–cysteine 145 and cysteine 122–cysteine 156. The N-linked (GlcNAc...) asparagine; by host glycan is linked to asparagine 116. The segment at 177-195 (LDNKRHFSVGTKFFISESL) is non-covalent dimerization. Asparagine 210 carries an N-linked (GlcNAc...) asparagine; by host glycan. A disulfide bridge links cysteine 224 with cysteine 285. Residues 315-366 (ACINFSWIRLILIALLIYFPIRWLVNKTTKPLFLWYDLIGLITYPILLLINC) traverse the membrane as a helical segment. Residues 367 to 484 (LWKYFPFKCS…VPGCPFLVTS (118 aa)) are Cytoplasmic-facing. A signal for signal peptide peptidase region spans residues 437-484 (LSFSLLKFVTEILIGLIILSQMPMSMAQTTQCLSGCFYVPGCPFLVTS). Residues 485 to 1067 (KFEKCPERDQ…YFGSFFDTIR (583 aa)) lie on the Lumenal side of the membrane. Asparagine 588, asparagine 605, and asparagine 980 each carry an N-linked (GlcNAc...) asparagine; by host glycan. The helical transmembrane segment at 1068-1088 (VILLIAFIFLVIYFCSILTTI) threads the bilayer. At 1089–1135 (CKGYVKNESYKSRSKIEDDDDSEIKAPMLMKDTMTRRRPPMDFSHLV) the chain is on the cytoplasmic side.

This sequence belongs to the tospovirus envelope glycoprotein family. As to quaternary structure, homodimer; disulfide-linked. Heterodimer with Glycoprotein C. Interacts with nucleoprotein. Heterodimer with Glycoprotein N. Interacts with nucleoprotein. Post-translationally, specific enzymatic cleavages in vivo yield mature proteins including Glycoprotein N and Glycoprotein C. In terms of processing, glycosylated with O-linked glycans. Glycosylation is essential for proper subcellular location. Cleaved at acidic pH.

The protein resides in the virion membrane. It is found in the host Golgi apparatus membrane. The protein localises to the host endoplasmic reticulum membrane. Its function is as follows. Forms the spikes present at the surface of the virion together with Glycoprotein C. They are able to attach the virion to a cell receptor and to promote fusion of membranes after endocytosis of the virion. Plays a role in virus binding and/or entry into the vector midgut. Forms the spikes present at the surface of the virion together with Glycoprotein N. They are able to attach the virion to a cell receptor and to promote fusion of membranes after endocytosis of the virion. Probable class II fusion protein. In Tomato spotted wilt virus (strain Regular2A) (TSWV), this protein is Envelopment polyprotein (GP).